The sequence spans 268 residues: Microtubule-associated protein RP/EB family member 1 (268 aa).

The residue at position 2 (A2) is an N-acetylalanine. Positions 14–116 constitute a Calponin-homology (CH) domain; it reads NLSRHDMLAW…FVQWFKKFFD (103 aa). K66 carries the post-translational modification N6-crotonyllysine. Y124 carries the phosphotyrosine modification. Residues 124–268 form an interaction with MTUS2/TIP150 region; sequence YDPVAARQGQ…GGPQEEQEEY (145 aa). Residues 146–160 are compositionally biased toward low complexity; sequence LNKPKKPLSSSSAAP. A disordered region spans residues 146–191; that stretch reads LNKPKKPLSSSSAAPQRPISTQRTAAAPKAGPGVVRKNPGVGNGDD. S155 and S165 each carry phosphoserine. The EB1 C-terminal domain maps to 185–255; it reads GVGNGDDEAA…LYATDEGFVI (71 aa). An interaction with CDK5RAP2 region spans residues 185–268; sequence GVGNGDDEAA…GGPQEEQEEY (84 aa). Positions 206-211 are interaction with APC; the sequence is TVEDLE. Positions 208–268 are DCTN1-binding; that stretch reads EDLEKERDFY…GGPQEEQEEY (61 aa). The residue at position 220 (K220) is an N6-acetyllysine. An APC-binding region spans residues 220 to 242; sequence KLRNIELICQENEGENDPVLQRI. Residues 232–255 are interaction with SKA1; that stretch reads EGENDPVLQRIVDILYATDEGFVI.

Belongs to the MAPRE family. In terms of assembly, homodimer. Heterodimer with MAPRE3. Interacts with DCTN1, DCTN2, TERF1 and dynein intermediate chain. Interaction with DIAPH1 and DIAPH2. Interacts (via C-terminal residues 206-211) with APC (via C-terminal residues 2674-2845); the interaction inhibits association with and bundling of F-actin. Interacts with CLASP2, DST, KIF2C and STIM1; probably required for their targeting to the growing microtubule plus ends. Interacts with MTUS2; interaction is direct and probably targets MTUS2 to microtubules. Interacts (via C-terminus) with SKA1 (via SXIP motif); the interaction is direct and stabilizes the kinetochore-microtubule attachment of the SKA1 complex. Interacts with APC2. Interacts with CLASP1. Interacts with CDK5RAP2. Interacts with MACF1. Interacts with RABL2/RABL2A; binds preferentially to GTP-bound RABL2. Interacts with KCNAB2. Interacts (via C-terminus) with CLIP1. Interacts with SLAIN2 and SLAIN1. Interacts with KIF18B; this interaction is required for efficient accumulation of KIF18B at microtubule plus ends. Interacts with MISP. Interacts with KNSTRN. Interacts with NCKAP5L. Interacts with CAMSAP2. Interacts with PDE4DIP isoform 13/MMG8/SMYLE; this interaction is required for its recruitment to the Golgi apparatus. Forms a pericentrosomal complex with AKAP9, CDK5RAP2 and PDE4DIP isoform 13/MMG8/SMYLE; within this complex, MAPRE1 binding to CDK5RAP2 may be mediated by PDE4DIP. Interacts with AKNA. Interacts with GAS2L1, GAS2L2, and GAS2L3. Interacts with RARRES1 and AGBL2. Post-translationally, acetylation at Lys-220 by KAT2B/PCAF promotes dynamic kinetochore-microtubule interactions in early mitosis. Crotonylated by KAT5 during mitosis, promoting astral microtubule plasticity and dynamic connection between astral microtubules and the cortex during mitotic chromosome segregation, thereby ensuring accurate spindle positioning in mitosis. Decrotonylated by HDAC3.

Its subcellular location is the cytoplasm. It is found in the cytoskeleton. It localises to the microtubule organizing center. The protein localises to the centrosome. The protein resides in the golgi apparatus. Its subcellular location is the spindle. It is found in the spindle pole. Functionally, plus-end tracking protein (+TIP) that binds to the plus-end of microtubules and regulates the dynamics of the microtubule cytoskeleton. Recruits other +TIP proteins to microtubules by binding to a conserved Ser-X-Leu-Pro (SXLP) motif in their polypeptide chains. Promotes cytoplasmic microtubule nucleation and elongation. Involved in mitotic spindle positioning by stabilizing microtubules and promoting dynamic connection between astral microtubules and the cortex during mitotic chromosome segregation. Assists chromosome alignment in metaphase by recruiting the SKA complex to the spindle and stabilizing its interactions with microtubule bundles (K-fibers). Also acts as a regulator of minus-end microtubule organization: interacts with the complex formed by AKAP9 and PDE4DIP, leading to recruit CAMSAP2 to the Golgi apparatus, thereby tethering non-centrosomal minus-end microtubules to the Golgi, an important step for polarized cell movement. Promotes elongation of CAMSAP2-decorated microtubule stretches on the minus-end of microtubules. Acts as a regulator of autophagosome transport via interaction with CAMSAP2. Functions downstream of Rho GTPases and DIAPH1 in stable microtubule formation. May play a role in cell migration. The sequence is that of Microtubule-associated protein RP/EB family member 1 (MAPRE1) from Pongo abelii (Sumatran orangutan).